A 622-amino-acid chain; its full sequence is DNA mismatch repair protein MutL (622 aa).

Residues 399–414 are compositionally biased toward basic and acidic residues; that stretch reads SSQNFHPDENDYRAEE. The segment at 399-422 is disordered; it reads SSQNFHPDENDYRAEEASPAEENP.

This sequence belongs to the DNA mismatch repair MutL/HexB family.

In terms of biological role, this protein is involved in the repair of mismatches in DNA. It is required for dam-dependent methyl-directed DNA mismatch repair. May act as a 'molecular matchmaker', a protein that promotes the formation of a stable complex between two or more DNA-binding proteins in an ATP-dependent manner without itself being part of a final effector complex. This Phocaeicola vulgatus (strain ATCC 8482 / DSM 1447 / JCM 5826 / CCUG 4940 / NBRC 14291 / NCTC 11154) (Bacteroides vulgatus) protein is DNA mismatch repair protein MutL.